The following is a 344-amino-acid chain: Ribosomal RNA small subunit methyltransferase H 2 (344 aa).

S-adenosyl-L-methionine contacts are provided by residues 78-80 (GGH), Asp98, Phe131, Asp145, and Gln152.

Belongs to the methyltransferase superfamily. RsmH family.

The protein localises to the cytoplasm. It carries out the reaction cytidine(1402) in 16S rRNA + S-adenosyl-L-methionine = N(4)-methylcytidine(1402) in 16S rRNA + S-adenosyl-L-homocysteine + H(+). In terms of biological role, specifically methylates the N4 position of cytidine in position 1402 (C1402) of 16S rRNA. This chain is Ribosomal RNA small subunit methyltransferase H 2, found in Acholeplasma laidlawii (strain PG-8A).